We begin with the raw amino-acid sequence, 346 residues long: S-adenosylmethionine:tRNA ribosyltransferase-isomerase (346 aa).

It belongs to the QueA family. As to quaternary structure, monomer.

It is found in the cytoplasm. It carries out the reaction 7-aminomethyl-7-carbaguanosine(34) in tRNA + S-adenosyl-L-methionine = epoxyqueuosine(34) in tRNA + adenine + L-methionine + 2 H(+). It participates in tRNA modification; tRNA-queuosine biosynthesis. Transfers and isomerizes the ribose moiety from AdoMet to the 7-aminomethyl group of 7-deazaguanine (preQ1-tRNA) to give epoxyqueuosine (oQ-tRNA). The protein is S-adenosylmethionine:tRNA ribosyltransferase-isomerase of Chloroherpeton thalassium (strain ATCC 35110 / GB-78).